The sequence spans 376 residues: Glucose-1-phosphate adenylyltransferase (376 aa).

Alpha-D-glucose 1-phosphate-binding positions include tyrosine 101, glycine 166, glutamate 181–lysine 182, and serine 192.

This sequence belongs to the bacterial/plant glucose-1-phosphate adenylyltransferase family. Homotetramer.

It catalyses the reaction alpha-D-glucose 1-phosphate + ATP + H(+) = ADP-alpha-D-glucose + diphosphate. It participates in glycan biosynthesis; glycogen biosynthesis. In terms of biological role, involved in the biosynthesis of ADP-glucose, a building block required for the elongation reactions to produce glycogen. Catalyzes the reaction between ATP and alpha-D-glucose 1-phosphate (G1P) to produce pyrophosphate and ADP-Glc. The polypeptide is Glucose-1-phosphate adenylyltransferase (Bacillus cereus (strain ATCC 14579 / DSM 31 / CCUG 7414 / JCM 2152 / NBRC 15305 / NCIMB 9373 / NCTC 2599 / NRRL B-3711)).